The following is a 327-amino-acid chain: tRNA uridine(34) hydroxylase (327 aa).

The 95-residue stretch at 123-217 folds into the Rhodanese domain; it reads SDPEVLLVDT…YLEEVKQEES (95 aa). C177 (cysteine persulfide intermediate) is an active-site residue.

Belongs to the TrhO family.

The catalysed reaction is uridine(34) in tRNA + AH2 + O2 = 5-hydroxyuridine(34) in tRNA + A + H2O. In terms of biological role, catalyzes oxygen-dependent 5-hydroxyuridine (ho5U) modification at position 34 in tRNAs. The sequence is that of tRNA uridine(34) hydroxylase from Shewanella piezotolerans (strain WP3 / JCM 13877).